We begin with the raw amino-acid sequence, 82 residues long: MEHVLGFVALAAGLIIGLGAVGACIGIGIMGSKYLEAAARQPELMNELQTKMFLLAGLIDAAFLIGVGIAMMFAFANPFVLK.

2 consecutive transmembrane segments (helical) span residues 7–27 (FVAL…CIGI) and 53–73 (FLLA…AMMF).

The protein belongs to the ATPase C chain family. In terms of assembly, F-type ATPases have 2 components, F(1) - the catalytic core - and F(0) - the membrane proton channel. F(1) has five subunits: alpha(3), beta(3), gamma(1), delta(1), epsilon(1). F(0) has three main subunits: a(1), b(2) and c(10-14). The alpha and beta chains form an alternating ring which encloses part of the gamma chain. F(1) is attached to F(0) by a central stalk formed by the gamma and epsilon chains, while a peripheral stalk is formed by the delta and b chains.

It is found in the cell inner membrane. In terms of biological role, f(1)F(0) ATP synthase produces ATP from ADP in the presence of a proton or sodium gradient. F-type ATPases consist of two structural domains, F(1) containing the extramembraneous catalytic core and F(0) containing the membrane proton channel, linked together by a central stalk and a peripheral stalk. During catalysis, ATP synthesis in the catalytic domain of F(1) is coupled via a rotary mechanism of the central stalk subunits to proton translocation. Its function is as follows. Key component of the F(0) channel; it plays a direct role in translocation across the membrane. A homomeric c-ring of between 10-14 subunits forms the central stalk rotor element with the F(1) delta and epsilon subunits. The protein is ATP synthase subunit c of Polaromonas sp. (strain JS666 / ATCC BAA-500).